Reading from the N-terminus, the 408-residue chain is Probable ethanolamine permease EutH (408 aa).

11 helical membrane passes run 1–21 (MGIN…AAVD), 61–81 (AMVG…PVII), 89–109 (ANPS…FFLA), 126–146 (ILGS…LGII), 155–175 (ALGV…GGLI), 192–212 (FALI…VALG), 230–250 (FLVA…LLGW), 274–294 (IEVI…VLLL), 313–333 (NIAA…FGMM), 342–362 (VINC…LGFA), and 369–389 (MIFP…GVAM).

Belongs to the EutH family.

The protein resides in the cell inner membrane. It catalyses the reaction ethanolamine(in) = ethanolamine(out). The protein operates within amine and polyamine degradation; ethanolamine degradation. Functionally, probably involved in the diffusion of protonated ethanolamine (EA) into the cell at low pH. At low pH most EA is protonated, and this permease becomes necessary. Contributes to bacterial survival and replication in acidified macrophage vacuoles, but not to bacterial uptake by macrophages. Expression of the eut operon allows this bacteria to use ethanolamine (EA) as a carbon, nitrogen and energy source. It relies on cobalamin (vitamin B12) both as a cofactor for the ethanolamine ammonia-lyase (EAL) activity and to induce the operon. EA enhances bacterial survival in macrophages in a concentration-dependent manner, suggesting it is an important nutrient during infection. This Salmonella typhimurium (strain LT2 / SGSC1412 / ATCC 700720) protein is Probable ethanolamine permease EutH.